The chain runs to 172 residues: Shikimate kinase (172 aa).

11–16 (GAGKST) is an ATP binding site. Mg(2+) is bound at residue Ser-15. Substrate is bound by residues Asp-33, Arg-57, and Gly-79. Arg-117 is an ATP binding site. Arg-136 lines the substrate pocket. Arg-153 contacts ATP.

Belongs to the shikimate kinase family. As to quaternary structure, monomer. The cofactor is Mg(2+).

It is found in the cytoplasm. It catalyses the reaction shikimate + ATP = 3-phosphoshikimate + ADP + H(+). Its pathway is metabolic intermediate biosynthesis; chorismate biosynthesis; chorismate from D-erythrose 4-phosphate and phosphoenolpyruvate: step 5/7. Catalyzes the specific phosphorylation of the 3-hydroxyl group of shikimic acid using ATP as a cosubstrate. This chain is Shikimate kinase, found in Pseudomonas savastanoi pv. phaseolicola (strain 1448A / Race 6) (Pseudomonas syringae pv. phaseolicola (strain 1448A / Race 6)).